Consider the following 99-residue polypeptide: UPF0235 protein Sbal223_1335 (99 aa).

This sequence belongs to the UPF0235 family.

This is UPF0235 protein Sbal223_1335 from Shewanella baltica (strain OS223).